A 372-amino-acid chain; its full sequence is F-box/kelch-repeat protein At5g49000 (372 aa).

The span at 1 to 11 (MSSPERKRKKR) shows a compositional bias: basic residues. Residues 1–24 (MSSPERKRKKRSLEPSPESTPNPS) are disordered. Positions 19-65 (STPNPSLPDDLIVSILARVSRLYYPILSLVSKSSRTLVTSPELYKTR) constitute an F-box domain. 4 Kelch repeats span residues 131–177 (NIYA…VVDG), 179–224 (IYVA…VIEG), 226–271 (IYIF…LYCY), and 273–312 (PGGI…GGKM).

This chain is F-box/kelch-repeat protein At5g49000, found in Arabidopsis thaliana (Mouse-ear cress).